The following is a 427-amino-acid chain: Serine--tRNA ligase (427 aa).

231–233 (TAE) is an L-serine binding site. 262 to 264 (RSE) provides a ligand contact to ATP. L-serine is bound at residue Glu-285. 349–352 (EISS) contacts ATP. Ser-385 provides a ligand contact to L-serine.

It belongs to the class-II aminoacyl-tRNA synthetase family. Type-1 seryl-tRNA synthetase subfamily. As to quaternary structure, homodimer. The tRNA molecule binds across the dimer.

It localises to the cytoplasm. It carries out the reaction tRNA(Ser) + L-serine + ATP = L-seryl-tRNA(Ser) + AMP + diphosphate + H(+). The enzyme catalyses tRNA(Sec) + L-serine + ATP = L-seryl-tRNA(Sec) + AMP + diphosphate + H(+). It participates in aminoacyl-tRNA biosynthesis; selenocysteinyl-tRNA(Sec) biosynthesis; L-seryl-tRNA(Sec) from L-serine and tRNA(Sec): step 1/1. In terms of biological role, catalyzes the attachment of serine to tRNA(Ser). Is also able to aminoacylate tRNA(Sec) with serine, to form the misacylated tRNA L-seryl-tRNA(Sec), which will be further converted into selenocysteinyl-tRNA(Sec). In Staphylococcus saprophyticus subsp. saprophyticus (strain ATCC 15305 / DSM 20229 / NCIMB 8711 / NCTC 7292 / S-41), this protein is Serine--tRNA ligase.